A 308-amino-acid polypeptide reads, in one-letter code: Protoheme IX farnesyltransferase 2 (308 aa).

Helical transmembrane passes span 20–40, 47–67, 92–114, 118–137, 144–164, 174–194, 218–238, 240–260, and 275–295; these read VTKP…FLLA, AVLM…GCAI, IPLK…LLAW, LAAL…LYSL, VYGT…GYCA, LILL…IAIF, LHIV…PLAG, TGVG…LMAL, and QVFG…ALDF.

The protein belongs to the UbiA prenyltransferase family. Protoheme IX farnesyltransferase subfamily.

The protein localises to the cell inner membrane. The enzyme catalyses heme b + (2E,6E)-farnesyl diphosphate + H2O = Fe(II)-heme o + diphosphate. The protein operates within porphyrin-containing compound metabolism; heme O biosynthesis; heme O from protoheme: step 1/1. Its function is as follows. Converts heme B (protoheme IX) to heme O by substitution of the vinyl group on carbon 2 of heme B porphyrin ring with a hydroxyethyl farnesyl side group. The sequence is that of Protoheme IX farnesyltransferase 2 from Shewanella loihica (strain ATCC BAA-1088 / PV-4).